Consider the following 384-residue polypeptide: Urea transporter 1 (384 aa).

Residue Glu39 is modified to Phosphoserine. A run of 5 helical transmembrane segments spans residues 61-81, 85-105, 111-131, 138-158, and 168-188; these read ISQVVFVSNPISGILILVGLL, PWWALCGCVGTVVSTLTALLL, AIAAGLQGYNATLVGILMAVF, FWWLIFPVSAMSMTCPVFSSA, and LPVFTLPFNMALSMYLSATGH. An N-linked (GlcNAc...) asparagine glycan is attached at Asn206. Helical transmembrane passes span 250-270, 276-296, 305-325, and 327-347; these read LMCLHAAIGSLLGVIAGLSLA, IYFGLWGFNSSLACIAIGGMF, LLALACALFTAYFGACMAHLM, and VVHLPACTWSFCLATLLFLLL.

Belongs to the urea transporter family. In terms of assembly, homotrimer; each subunit contains a pore through which urea permeates. Identified in a complex with STOM. Post-translationally, N-glycosylated in red blood cells, as well as in most non-erythroid tissues, except in the gastrocnemius muscle and in the gastrointestinal tract, including liver, colon and stomach. As to expression, expressed in brain, kidney, heart, liver, lung, skeletal muscle, spleen, testis, ureter and urinary bladder (at protein level). Along the gastrointestinal tract, detected in colon, jejunum and stomach (at protein level). In the kidney, expressed in some microvessels of the inner and outer medulla, but not all (at protein level). Not detected in the cortex (at protein level). Detected in the urothelium all along the urinary tract, including the papilla surface, the ureter, the bladder and the urethra (at protein level). In the brain, expressed at the border of the corpus callosum and striatum in astrocytic cellular processes surrounding blood microvessels (at protein level). Detected in erythrocytes (at protein level).

Its subcellular location is the cell membrane. The protein localises to the basolateral cell membrane. It catalyses the reaction urea(in) = urea(out). Functionally, mediates the transport of urea driven by a concentration gradient across the cell membranes of erythrocytes and the renal inner medullary collecting duct which is critical to the urinary concentrating mechanism. Facilitates water transport in erythrocytes. The polypeptide is Urea transporter 1 (Slc14a1) (Mus musculus (Mouse)).